Consider the following 488-residue polypeptide: Rhamnulokinase (488 aa).

13-17 provides a ligand contact to ATP; sequence ASSGR. C68 and C222 are joined by a disulfide. Residues G83 and 236 to 238 each bind substrate; that span reads HDT. D237 serves as the catalytic Proton acceptor. T259 contributes to the ATP binding site. N296 provides a ligand contact to substrate. An ATP-binding site is contributed by Q304. Cysteines 353 and 370 form a disulfide. G402 contacts ATP. The cysteines at positions 413 and 417 are disulfide-linked.

It belongs to the rhamnulokinase family. Requires Mg(2+) as cofactor.

The catalysed reaction is L-rhamnulose + ATP = L-rhamnulose 1-phosphate + ADP + H(+). Its pathway is carbohydrate degradation; L-rhamnose degradation; glycerone phosphate from L-rhamnose: step 2/3. Its function is as follows. Involved in the catabolism of L-rhamnose (6-deoxy-L-mannose). Catalyzes the transfer of the gamma-phosphate group from ATP to the 1-hydroxyl group of L-rhamnulose to yield L-rhamnulose 1-phosphate. This chain is Rhamnulokinase, found in Klebsiella pneumoniae (strain 342).